Consider the following 344-residue polypeptide: uncharacterized protein (344 aa).

A signal peptide spans M1 to A27. Residues G29–K344 enclose the GH18 domain. E140 serves as the catalytic Proton donor.

The protein belongs to the glycosyl hydrolase 18 family.

This is an uncharacterized protein from Bacillus subtilis (strain 168).